Consider the following 537-residue polypeptide: Chaperonin GroEL (537 aa).

ATP-binding positions include 31 to 34 (TLGP), 87 to 91 (DGTTT), glycine 415, and aspartate 495.

The protein belongs to the chaperonin (HSP60) family. Forms a cylinder of 14 subunits composed of two heptameric rings stacked back-to-back. Interacts with the co-chaperonin GroES.

It localises to the cytoplasm. It carries out the reaction ATP + H2O + a folded polypeptide = ADP + phosphate + an unfolded polypeptide.. In terms of biological role, together with its co-chaperonin GroES, plays an essential role in assisting protein folding. The GroEL-GroES system forms a nano-cage that allows encapsulation of the non-native substrate proteins and provides a physical environment optimized to promote and accelerate protein folding. This chain is Chaperonin GroEL, found in Methanoregula boonei (strain DSM 21154 / JCM 14090 / 6A8).